The primary structure comprises 478 residues: Ankyrin repeat and BTB/POZ domain-containing protein 1 (478 aa).

2 ANK repeats span residues 1–31 (MDTS…EVNV) and 35–64 (WDST…RCEA). BTB domains are found at residues 115 to 182 (SDVV…DIGV) and 272 to 346 (PDIC…ELPP). The stretch at 451-477 (VQTYSAIEEAQQRLRALEDLLVSIGLD) forms a coiled coil.

The protein resides in the cytoplasm. Its function is as follows. May act as a mediator of the PTEN growth-suppressive signaling pathway. May play a role in developmental processes. The chain is Ankyrin repeat and BTB/POZ domain-containing protein 1 from Mus musculus (Mouse).